The primary structure comprises 176 residues: uncharacterized protein (176 aa).

Residues 15-28 (TSSNPPASASQSTG) are compositionally biased toward polar residues. 2 disordered regions span residues 15–100 (TSSN…TSAG) and 125–176 (ASLR…NLGA). Over residues 43 to 52 (FIDKVTDKPS) the composition is skewed to basic and acidic residues.

This is an uncharacterized protein from Homo sapiens (Human).